The primary structure comprises 293 residues: Ribosomal protein L11 methyltransferase (293 aa).

4 residues coordinate S-adenosyl-L-methionine: threonine 145, glycine 166, aspartate 188, and asparagine 230.

This sequence belongs to the methyltransferase superfamily. PrmA family.

Its subcellular location is the cytoplasm. It carries out the reaction L-lysyl-[protein] + 3 S-adenosyl-L-methionine = N(6),N(6),N(6)-trimethyl-L-lysyl-[protein] + 3 S-adenosyl-L-homocysteine + 3 H(+). In terms of biological role, methylates ribosomal protein L11. In Pasteurella multocida (strain Pm70), this protein is Ribosomal protein L11 methyltransferase.